A 343-amino-acid polypeptide reads, in one-letter code: Heat-inducible transcription repressor HrcA (343 aa).

Belongs to the HrcA family.

Its function is as follows. Negative regulator of class I heat shock genes (grpE-dnaK-dnaJ and groELS operons). Prevents heat-shock induction of these operons. This chain is Heat-inducible transcription repressor HrcA, found in Caldanaerobacter subterraneus subsp. tengcongensis (strain DSM 15242 / JCM 11007 / NBRC 100824 / MB4) (Thermoanaerobacter tengcongensis).